The sequence spans 584 residues: MKMMLVRRFRVLILMVFLVACALHIALDLLPRLERRGARPSGEPGCSCAQPAAEVAAPGWAQVRGRPGEPPAASSAAGDAGWPNKHTLRILQDFSSDPSSNLSSHSLEKLPPAAEPAERALRGRDPGALRPHDPAHRPLLRDPGPRRSESPPGPGGDASLLARLFEHPLYRVAVPPLTEEDVLFNVNSDTRLSPKAAENPDWPHAGAEGAEFLSPGEAAVDSYPNWLKFHIGINRYELYSRHNPAIEALLHDLSSQRITSVAMKSGGTQLKLIMTFQNYGQALFKPMKQTREQETPPDFFYFSDYERHNAEIAAFHLDRILDFRRVPPVAGRMVNMTKEIRDVTRDKKLWRTFFISPANNICFYGECSYYCSTEHALCGKPDQIEGSLAAFLPDLSLAKRKTWRNPWRRSYHKRKKAEWEVDPDYCEEVKQTPPYDSSHRILDVMDMTIFDFLMGNMDRHHYETFEKFGNETFIIHLDNGRGFGKYSHDELSILVPLQQCCRIRKSTYLRLQLLAKEEYKLSLLMAESLRGDQVAPVLYQPHLEALDRRLRVVLKAVRDCVERNGLHSVVDDDLDTEHRAASAR.

Topologically, residues 1-10 (MKMMLVRRFR) are cytoplasmic. Residues 1 to 92 (MKMMLVRRFR…PNKHTLRILQ (92 aa)) constitute a propeptide that is removed on maturation. A helical; Signal-anchor for type II membrane protein transmembrane segment spans residues 11-31 (VLILMVFLVACALHIALDLLP). Topologically, residues 32–584 (RLERRGARPS…DTEHRAASAR (553 aa)) are lumenal. 2 disordered regions span residues 62–81 (QVRGRPGEPPAASSAAGDAG) and 94–159 (FSSD…GDAS). Low complexity-rich tracts occupy residues 71–81 (PAASSAAGDAG) and 95–112 (SSDPSSNLSSHSLEKLPP). Residue N101 is glycosylated (N-linked (GlcNAc...) asparagine). A Phosphoserine modification is found at S106. Over residues 116–149 (PAERALRGRDPGALRPHDPAHRPLLRDPGPRRSE) the composition is skewed to basic and acidic residues. Residues Q269, K285, and E306 each contribute to the ATP site. E306 provides a ligand contact to Mn(2+). N335 is a glycosylation site (N-linked (GlcNAc...) asparagine). The segment at 354 to 565 (FISPANNICF…AVRDCVERNG (212 aa)) is kinase domain. 2 disulfides stabilise this stretch: C362–C378 and C367–C371. 389 to 392 (AAFL) lines the ATP pocket. 2 disulfides stabilise this stretch: C426–C500 and C501–C560. D458 is a catalytic residue. E463 is a binding site for ATP. N470 carries N-linked (GlcNAc...) asparagine glycosylation. D478 is a binding site for ATP. D478 serves as a coordination point for Mn(2+).

It belongs to the FAM20 family. Homodimer; disulfide-linked. Interacts with FAM20A; probably forming a heterotetramer of 2 subunits of FAM20A and 2 subunits of FAM20C. Interacts with protease MBTPS1/S1P; the interaction results in FAM20C cleavage and secretion. Interacts with COPII components SEC23A and SEC24A; transport of FAM20C from the endoplasmic reticulum to the Golgi is likely to be mediated by COPII vesicles. It depends on Mn(2+) as a cofactor. Post-translationally, N-glycosylation is required for folding. Autophosphorylated. In terms of processing, propeptide cleavage by MBTPS1/S1P promotes FAM20C secretion and maximal kinase activity which is essential for efficient osteoblast differentiation and biomineralization. As to expression, widely expressed.

It is found in the golgi apparatus membrane. It localises to the secreted. The protein localises to the endoplasmic reticulum. It catalyses the reaction L-seryl-[protein] + ATP = O-phospho-L-seryl-[protein] + ADP + H(+). It carries out the reaction L-threonyl-[protein] + ATP = O-phospho-L-threonyl-[protein] + ADP + H(+). With respect to regulation, serine/threonine protein kinase activity is increased upon interaction with FAM20A. Its function is as follows. Golgi serine/threonine protein kinase that phosphorylates secretory pathway proteins within Ser-x-Glu/pSer motifs and plays a key role in biomineralization of bones and teeth. Constitutes the main protein kinase for extracellular proteins, generating the majority of the extracellular phosphoproteome. Mainly phosphorylates proteins within the Ser-x-Glu/pSer motif, but also displays a broader substrate specificity. Phosphorylates ERO1A, enhancing its activity which is required to maintain endoplasmic reticulum redox homeostasis and for oxidative protein folding. During endoplasmic reticulum stress, phosphorylates P4HB/PDIA1 which induces a functional switch, causing P4HB to change from an oxidoreductase to a molecular chaperone. This is critical to maintain ER proteostasis and reduce cell death under ER stress. Phosphorylation of P4HB also promotes its interaction with ERN1, leading to reduced activity of ERN1, a key sensor for the endoplasmic reticulum unfolded protein response. Required for osteoblast differentiation and mineralization. Phosphorylates casein as well as a number of proteins involved in biomineralization such as AMELX, AMTN, ENAM and SPP1/OPN. In addition to its role in biomineralization, also plays a role in lipid homeostasis, wound healing and cell migration and adhesion. This chain is Extracellular serine/threonine protein kinase FAM20C, found in Homo sapiens (Human).